We begin with the raw amino-acid sequence, 518 residues long: D-aminopeptidase (518 aa).

Residue serine 62 is the Nucleophile of the active site. Lysine 65 serves as the catalytic Proton donor/acceptor. The interval 477-487 (QRSMDAPSPGE) is important for specificity. Position 481 (aspartate 481) interacts with substrate.

Belongs to the peptidase S12 family. Homodimer.

The enzyme catalyses Release of an N-terminal D-amino acid from a peptide, Xaa-|-Yaa-, in which Xaa is preferably D-Ala, D-Ser or D-Thr. D-amino acid amides and methyl esters also are hydrolyzed, as is glycine amide.. Its activity is regulated as follows. Inhibited by beta-lactam compounds such as 6-aminopenicillic acid, 7-aminocephalosporanic acid, benzylpenicillin and ampicillin. Inhibited by p-chloromercuribenzoate. Functionally, hydrolyzes N-terminal residues in D-amino acid-containing peptides. This chain is D-aminopeptidase, found in Brucella ovis (strain ATCC 25840 / 63/290 / NCTC 10512).